A 94-amino-acid chain; its full sequence is UPF0298 protein SZO_03600 (94 aa).

Belongs to the UPF0298 family.

Its subcellular location is the cytoplasm. The polypeptide is UPF0298 protein SZO_03600 (Streptococcus equi subsp. zooepidemicus (strain H70)).